The primary structure comprises 464 residues: ATP synthase subunit beta (464 aa).

Residue 153 to 160 (GGAGVGKT) participates in ATP binding.

Belongs to the ATPase alpha/beta chains family. In terms of assembly, F-type ATPases have 2 components, CF(1) - the catalytic core - and CF(0) - the membrane proton channel. CF(1) has five subunits: alpha(3), beta(3), gamma(1), delta(1), epsilon(1). CF(0) has three main subunits: a(1), b(2) and c(9-12). The alpha and beta chains form an alternating ring which encloses part of the gamma chain. CF(1) is attached to CF(0) by a central stalk formed by the gamma and epsilon chains, while a peripheral stalk is formed by the delta and b chains.

It localises to the cell inner membrane. The enzyme catalyses ATP + H2O + 4 H(+)(in) = ADP + phosphate + 5 H(+)(out). Produces ATP from ADP in the presence of a proton gradient across the membrane. The catalytic sites are hosted primarily by the beta subunits. This is ATP synthase subunit beta from Burkholderia vietnamiensis (strain G4 / LMG 22486) (Burkholderia cepacia (strain R1808)).